Reading from the N-terminus, the 179-residue chain is Nucleoside diphosphate kinase 6 (179 aa).

Positions 18, 67, 95, 101, 115, and 125 each coordinate ATP. His128 functions as the Pros-phosphohistidine intermediate in the catalytic mechanism.

The protein belongs to the NDK family. Mg(2+) is required as a cofactor.

The catalysed reaction is a 2'-deoxyribonucleoside 5'-diphosphate + ATP = a 2'-deoxyribonucleoside 5'-triphosphate + ADP. It carries out the reaction a ribonucleoside 5'-diphosphate + ATP = a ribonucleoside 5'-triphosphate + ADP. Its function is as follows. Major role in the synthesis of nucleoside triphosphates other than ATP. The ATP gamma phosphate is transferred to the NDP beta phosphate via a ping-pong mechanism, using a phosphorylated active-site intermediate. The sequence is that of Nucleoside diphosphate kinase 6 (nme6) from Xenopus tropicalis (Western clawed frog).